The primary structure comprises 83 residues: MKTLLLTLVVVTIVCLDLGYSLICFNQETYRPETTTTCPDGEDTCYSTFWNDHHGVKIERGCGCPRVNPPISIICCKTDKCNN.

The N-terminal stretch at 1–21 (MKTLLLTLVVVTIVCLDLGYS) is a signal peptide. 4 disulfide bridges follow: C24–C45, C38–C62, C64–C75, and C76–C81.

Belongs to the three-finger toxin family. Short-chain subfamily. Type I alpha-neurotoxin sub-subfamily. Expressed by the venom gland.

Its subcellular location is the secreted. The chain is Weak toxin DE-1 from Ophiophagus hannah (King cobra).